Consider the following 310-residue polypeptide: 4-diphosphocytidyl-2-C-methyl-D-erythritol kinase (310 aa).

Lys20 is a catalytic residue. Residue 106-116 (PMGGGLGGGSS) coordinates ATP. Asp148 is a catalytic residue.

It belongs to the GHMP kinase family. IspE subfamily. In terms of assembly, homodimer.

The enzyme catalyses 4-CDP-2-C-methyl-D-erythritol + ATP = 4-CDP-2-C-methyl-D-erythritol 2-phosphate + ADP + H(+). Its pathway is isoprenoid biosynthesis; isopentenyl diphosphate biosynthesis via DXP pathway; isopentenyl diphosphate from 1-deoxy-D-xylulose 5-phosphate: step 3/6. Functionally, catalyzes the phosphorylation of the position 2 hydroxy group of 4-diphosphocytidyl-2C-methyl-D-erythritol. The sequence is that of 4-diphosphocytidyl-2-C-methyl-D-erythritol kinase from Yersinia pseudotuberculosis serotype O:3 (strain YPIII).